The primary structure comprises 186 residues: MAAKIFCLIMLLGLSASAATASIFPQCSQAPIASLLPPYLSPAMSSVCENPILLPYRIQQAIAAGILPLSPLFLQQSSALLQQLPLVHLLAQNIRAQQLQQLVLANLAAYSQQQQLPLVHLLAQNIRAQQLQQLVLANLAAYSQQQQFLPFNQQLAAAYPRQFLPFNQLAALNSHAYVQQQQLLPF.

A signal peptide spans 1 to 21; the sequence is MAAKIFCLIMLLGLSASAATA.

This sequence belongs to the zein family.

Functionally, zeins are major seed storage proteins. This Zea mays (Maize) protein is Zein-alpha PZ19.1.